The chain runs to 80 residues: Protein FAM229B (80 aa).

The disordered stretch occupies residues 1-44 (MPFQFGTQPRRFPVEGGDSSIELEPGLSSSAACNGKEMSPTRQL).

Belongs to the FAM229 family.

The chain is Protein FAM229B (FAM229B) from Homo sapiens (Human).